Here is a 403-residue protein sequence, read N- to C-terminus: S-adenosylmethionine sensor upstream of mTORC1 (403 aa).

Gly residues predominate over residues 1 to 10; it reads MEPGPGGRGA. Positions 1 to 32 are disordered; sequence MEPGPGGRGAARGQRPPNAAQPREQERKLEQE. Residues 11–22 show a composition bias toward low complexity; that stretch reads ARGQRPPNAAQP. Residues 23 to 32 show a composition bias toward basic and acidic residues; sequence REQERKLEQE. Positions 93, 170, 188, 200, 201, and 242 each coordinate S-adenosyl-L-methionine.

It belongs to the BMT2/SAMTOR family. In terms of assembly, interacts with the GATOR1 complex; interaction is disrupted when SAMTOR binds S-adenosyl-L-methionine. Interacts with the KICSTOR complex; interaction is disrupted when SAMTOR binds S-adenosyl-L-methionine.

S-adenosyl-L-methionine-binding protein that acts as an inhibitor of mTORC1 signaling via interaction with the GATOR1 and KICSTOR complexes. Acts as a sensor of S-adenosyl-L-methionine to signal methionine sufficiency to mTORC1: in presence of methionine, binds S-adenosyl-L-methionine, leading to disrupt interaction with the GATOR1 and KICSTOR complexes and promote mTORC1 signaling. Upon methionine starvation, S-adenosyl-L-methionine levels are reduced, thereby promoting the association with GATOR1 and KICSTOR, leading to inhibit mTORC1 signaling. Probably also acts as a S-adenosyl-L-methionine-dependent methyltransferase. The polypeptide is S-adenosylmethionine sensor upstream of mTORC1 (Mus musculus (Mouse)).